Consider the following 116-residue polypeptide: MTDSEKSATIKVTDASFATDVLSSNKPVLVDFWATWCGPCKMVAPVLEEIATERATDLTVAKLDVDTNPETARNFQVVSIPTLILFKDGQPVKRIVGAKGKAALLRELSDVVPNLN.

One can recognise a Thioredoxin domain in the interval 2–113; the sequence is TDSEKSATIK…LLRELSDVVP (112 aa). Residues C37 and C40 are joined by a disulfide bond.

The protein belongs to the thioredoxin family.

Participates in various redox reactions through the reversible oxidation of its active center dithiol to a disulfide and catalyzes dithiol-disulfide exchange reactions. The protein is Thioredoxin (trxA) of Mycobacterium bovis (strain ATCC BAA-935 / AF2122/97).